The primary structure comprises 302 residues: Sulfate adenylyltransferase subunit 2 (302 aa).

This sequence belongs to the PAPS reductase family. CysD subfamily. As to quaternary structure, heterodimer composed of CysD, the smaller subunit, and CysN.

The enzyme catalyses sulfate + ATP + H(+) = adenosine 5'-phosphosulfate + diphosphate. It functions in the pathway sulfur metabolism; hydrogen sulfide biosynthesis; sulfite from sulfate: step 1/3. In terms of biological role, with CysN forms the ATP sulfurylase (ATPS) that catalyzes the adenylation of sulfate producing adenosine 5'-phosphosulfate (APS) and diphosphate, the first enzymatic step in sulfur assimilation pathway. APS synthesis involves the formation of a high-energy phosphoric-sulfuric acid anhydride bond driven by GTP hydrolysis by CysN coupled to ATP hydrolysis by CysD. This Zymomonas mobilis subsp. mobilis (strain ATCC 31821 / ZM4 / CP4) protein is Sulfate adenylyltransferase subunit 2.